The chain runs to 113 residues: uncharacterized protein (113 aa).

Residues 1–29 (MLVVYMCIWVLYLLLFLFLFLFIASPASL) form the signal peptide. 2 helical membrane-spanning segments follow: residues 34–54 (THIL…CAFF) and 56–76 (QVLC…FYFF).

Its subcellular location is the membrane. This is an uncharacterized protein from Saccharomyces cerevisiae (strain ATCC 204508 / S288c) (Baker's yeast).